We begin with the raw amino-acid sequence, 221 residues long: ATP phosphoribosyltransferase (221 aa).

This sequence belongs to the ATP phosphoribosyltransferase family. Short subfamily. Heteromultimer composed of HisG and HisZ subunits.

It is found in the cytoplasm. It carries out the reaction 1-(5-phospho-beta-D-ribosyl)-ATP + diphosphate = 5-phospho-alpha-D-ribose 1-diphosphate + ATP. The protein operates within amino-acid biosynthesis; L-histidine biosynthesis; L-histidine from 5-phospho-alpha-D-ribose 1-diphosphate: step 1/9. In terms of biological role, catalyzes the condensation of ATP and 5-phosphoribose 1-diphosphate to form N'-(5'-phosphoribosyl)-ATP (PR-ATP). Has a crucial role in the pathway because the rate of histidine biosynthesis seems to be controlled primarily by regulation of HisG enzymatic activity. The polypeptide is ATP phosphoribosyltransferase (Neisseria gonorrhoeae (strain ATCC 700825 / FA 1090)).